A 119-amino-acid chain; its full sequence is Ribosome-binding factor A (119 aa).

Belongs to the RbfA family. As to quaternary structure, monomer. Binds 30S ribosomal subunits, but not 50S ribosomal subunits or 70S ribosomes.

The protein resides in the cytoplasm. Its function is as follows. One of several proteins that assist in the late maturation steps of the functional core of the 30S ribosomal subunit. Associates with free 30S ribosomal subunits (but not with 30S subunits that are part of 70S ribosomes or polysomes). Required for efficient processing of 16S rRNA. May interact with the 5'-terminal helix region of 16S rRNA. The chain is Ribosome-binding factor A from Lactococcus lactis subsp. cremoris (strain SK11).